The following is an 88-amino-acid chain: UPF0297 protein SGO_2042 (88 aa).

It belongs to the UPF0297 family.

This chain is UPF0297 protein SGO_2042, found in Streptococcus gordonii (strain Challis / ATCC 35105 / BCRC 15272 / CH1 / DL1 / V288).